A 209-amino-acid polypeptide reads, in one-letter code: MKIFNKDGNKNSKEDTKAGAENSEAQNSGSSAEEVNKARENPEEASASSEAEKSPEVKCQEEKQVLMEKYYRLAADFDNFKKRTARQMEENRKAVLEQVLLDFVEVTDNFDRALKSAKTAEDMSSIVSGIEQLSRQFFSILEKYGLEKIESEKASEFDPHRHEAVHHIETSEVPDNTIVDVYKTGYALNSKVIRPAMVSVARNPDEAEK.

The segment covering 1 to 18 (MKIFNKDGNKNSKEDTKA) has biased composition (basic and acidic residues). Residues 1-60 (MKIFNKDGNKNSKEDTKAGAENSEAQNSGSSAEEVNKARENPEEASASSEAEKSPEVKCQ) are disordered. The span at 23 to 33 (SEAQNSGSSAE) shows a compositional bias: polar residues. Positions 50–60 (EAEKSPEVKCQ) are enriched in basic and acidic residues.

Belongs to the GrpE family. In terms of assembly, homodimer.

The protein localises to the cytoplasm. Its function is as follows. Participates actively in the response to hyperosmotic and heat shock by preventing the aggregation of stress-denatured proteins, in association with DnaK and GrpE. It is the nucleotide exchange factor for DnaK and may function as a thermosensor. Unfolded proteins bind initially to DnaJ; upon interaction with the DnaJ-bound protein, DnaK hydrolyzes its bound ATP, resulting in the formation of a stable complex. GrpE releases ADP from DnaK; ATP binding to DnaK triggers the release of the substrate protein, thus completing the reaction cycle. Several rounds of ATP-dependent interactions between DnaJ, DnaK and GrpE are required for fully efficient folding. The sequence is that of Protein GrpE from Methanosarcina barkeri (strain Fusaro / DSM 804).